A 156-amino-acid polypeptide reads, in one-letter code: Small ribosomal subunit protein uS7 (156 aa).

It belongs to the universal ribosomal protein uS7 family. As to quaternary structure, part of the 30S ribosomal subunit. Contacts proteins S9 and S11.

Its function is as follows. One of the primary rRNA binding proteins, it binds directly to 16S rRNA where it nucleates assembly of the head domain of the 30S subunit. Is located at the subunit interface close to the decoding center, probably blocks exit of the E-site tRNA. The chain is Small ribosomal subunit protein uS7 from Anaeromyxobacter dehalogenans (strain 2CP-1 / ATCC BAA-258).